Here is a 476-residue protein sequence, read N- to C-terminus: Glycogen synthase (476 aa).

An ADP-alpha-D-glucose-binding site is contributed by K15.

This sequence belongs to the glycosyltransferase 1 family. Bacterial/plant glycogen synthase subfamily.

The enzyme catalyses [(1-&gt;4)-alpha-D-glucosyl](n) + ADP-alpha-D-glucose = [(1-&gt;4)-alpha-D-glucosyl](n+1) + ADP + H(+). Its pathway is glycan biosynthesis; glycogen biosynthesis. Functionally, synthesizes alpha-1,4-glucan chains using ADP-glucose. The protein is Glycogen synthase of Chlamydia pneumoniae (Chlamydophila pneumoniae).